Consider the following 431-residue polypeptide: Trigger factor (431 aa).

Residues 160-245 form the PPIase FKBP-type domain; it reads DDRVTIDFVG…VKKVEVMVLP (86 aa).

The protein belongs to the FKBP-type PPIase family. Tig subfamily.

The protein localises to the cytoplasm. It carries out the reaction [protein]-peptidylproline (omega=180) = [protein]-peptidylproline (omega=0). In terms of biological role, involved in protein export. Acts as a chaperone by maintaining the newly synthesized protein in an open conformation. Functions as a peptidyl-prolyl cis-trans isomerase. The chain is Trigger factor from Mannheimia succiniciproducens (strain KCTC 0769BP / MBEL55E).